The sequence spans 306 residues: Phospho-N-acetylmuramoyl-pentapeptide-transferase (306 aa).

Helical transmembrane passes span 1–21 (MDIY…IIFP), 49–69 (GTPT…GLIL), 75–95 (LIFT…VSIV), 104–124 (AWQK…TILQ), 130–150 (IFGI…LVSG), 160–180 (GIDG…MFFS), 182–202 (SSME…FLVY), 209–229 (VFMG…YALM), 234–254 (LSLL…ILQV), and 284–304 (IVGV…AFFL).

This sequence belongs to the glycosyltransferase 4 family. MraY subfamily. It depends on Mg(2+) as a cofactor.

The protein localises to the cell inner membrane. It catalyses the reaction UDP-N-acetyl-alpha-D-muramoyl-L-alanyl-gamma-D-glutamyl-meso-2,6-diaminopimeloyl-D-alanyl-D-alanine + di-trans,octa-cis-undecaprenyl phosphate = di-trans,octa-cis-undecaprenyl diphospho-N-acetyl-alpha-D-muramoyl-L-alanyl-D-glutamyl-meso-2,6-diaminopimeloyl-D-alanyl-D-alanine + UMP. It functions in the pathway cell wall biogenesis; peptidoglycan biosynthesis. Catalyzes the initial step of the lipid cycle reactions in the biosynthesis of the cell wall peptidoglycan: transfers peptidoglycan precursor phospho-MurNAc-pentapeptide from UDP-MurNAc-pentapeptide onto the lipid carrier undecaprenyl phosphate, yielding undecaprenyl-pyrophosphoryl-MurNAc-pentapeptide, known as lipid I. The chain is Phospho-N-acetylmuramoyl-pentapeptide-transferase from Fervidobacterium nodosum (strain ATCC 35602 / DSM 5306 / Rt17-B1).